The primary structure comprises 644 residues: Macrolide export ATP-binding/permease protein MacB (644 aa).

The region spanning 7–245 (IELQDITRSF…IPETDQNGRR (239 aa)) is the ABC transporter domain. An ATP-binding site is contributed by 43–50 (GPSGSGKS). 4 helical membrane passes run 271–291 (ALTL…LAIG), 526–546 (IAAI…LVSV), 570–590 (FLTE…VIGI), and 607–627 (LLPM…FGFL).

Belongs to the ABC transporter superfamily. Macrolide exporter (TC 3.A.1.122) family. Homodimer. Part of the tripartite efflux system MacAB-TolC, which is composed of an inner membrane transporter, MacB, a periplasmic membrane fusion protein, MacA, and an outer membrane component, TolC. The complex forms a large protein conduit and can translocate molecules across both the inner and outer membranes. Interacts with MacA.

It is found in the cell inner membrane. In terms of biological role, part of the tripartite efflux system MacAB-TolC. MacB is a non-canonical ABC transporter that contains transmembrane domains (TMD), which form a pore in the inner membrane, and an ATP-binding domain (NBD), which is responsible for energy generation. Confers resistance against macrolides. The protein is Macrolide export ATP-binding/permease protein MacB of Marinobacter nauticus (strain ATCC 700491 / DSM 11845 / VT8) (Marinobacter aquaeolei).